The chain runs to 203 residues: LexA repressor (203 aa).

A DNA-binding region (H-T-H motif) is located at residues 30-50 (VREICQAVSLKSTSTVHGHLK). Catalysis depends on for autocatalytic cleavage activity residues S127 and K164.

Belongs to the peptidase S24 family. As to quaternary structure, homodimer.

The enzyme catalyses Hydrolysis of Ala-|-Gly bond in repressor LexA.. In terms of biological role, represses a number of genes involved in the response to DNA damage (SOS response), including recA and lexA. In the presence of single-stranded DNA, RecA interacts with LexA causing an autocatalytic cleavage which disrupts the DNA-binding part of LexA, leading to derepression of the SOS regulon and eventually DNA repair. In Clostridium perfringens (strain 13 / Type A), this protein is LexA repressor.